The sequence spans 172 residues: 3-hydroxydecanoyl-[acyl-carrier-protein] dehydratase (172 aa).

Residue H71 is part of the active site.

Belongs to the thioester dehydratase family. FabA subfamily. Homodimer.

The protein localises to the cytoplasm. The enzyme catalyses a (3R)-hydroxyacyl-[ACP] = a (2E)-enoyl-[ACP] + H2O. It carries out the reaction (3R)-hydroxydecanoyl-[ACP] = (2E)-decenoyl-[ACP] + H2O. It catalyses the reaction (2E)-decenoyl-[ACP] = (3Z)-decenoyl-[ACP]. It participates in lipid metabolism; fatty acid biosynthesis. Its function is as follows. Necessary for the introduction of cis unsaturation into fatty acids. Catalyzes the dehydration of (3R)-3-hydroxydecanoyl-ACP to E-(2)-decenoyl-ACP and then its isomerization to Z-(3)-decenoyl-ACP. Can catalyze the dehydratase reaction for beta-hydroxyacyl-ACPs with saturated chain lengths up to 16:0, being most active on intermediate chain length. The protein is 3-hydroxydecanoyl-[acyl-carrier-protein] dehydratase of Escherichia coli O127:H6 (strain E2348/69 / EPEC).